Reading from the N-terminus, the 290-residue chain is 4-hydroxy-tetrahydrodipicolinate synthase (290 aa).

T44 serves as a coordination point for pyruvate. Y132 serves as the catalytic Proton donor/acceptor. Residue K160 is the Schiff-base intermediate with substrate of the active site. I202 contributes to the pyruvate binding site.

It belongs to the DapA family. As to quaternary structure, homotetramer; dimer of dimers.

The protein resides in the cytoplasm. It carries out the reaction L-aspartate 4-semialdehyde + pyruvate = (2S,4S)-4-hydroxy-2,3,4,5-tetrahydrodipicolinate + H2O + H(+). The protein operates within amino-acid biosynthesis; L-lysine biosynthesis via DAP pathway; (S)-tetrahydrodipicolinate from L-aspartate: step 3/4. Catalyzes the condensation of (S)-aspartate-beta-semialdehyde [(S)-ASA] and pyruvate to 4-hydroxy-tetrahydrodipicolinate (HTPA). This Geotalea daltonii (strain DSM 22248 / JCM 15807 / FRC-32) (Geobacter daltonii) protein is 4-hydroxy-tetrahydrodipicolinate synthase.